A 230-amino-acid polypeptide reads, in one-letter code: Inactive 2-(S)-hydroxypropyl-CoM dehydrogenase 2 (230 aa).

Belongs to the short-chain dehydrogenases/reductases (SDR) family.

In Xanthobacter autotrophicus (strain ATCC BAA-1158 / Py2), this protein is Inactive 2-(S)-hydroxypropyl-CoM dehydrogenase 2.